The following is a 220-amino-acid chain: Probable 26S proteasome regulatory subunit p27 (220 aa).

A PDZ domain is found at 119–196; that stretch reads ARRNNDDQAI…PVLLLREGQI (78 aa).

This sequence belongs to the proteasome subunit p27 family. In terms of assembly, part of a transient complex containing NAS2, RPT4 and RPT5 formed during the assembly of the 26S proteasome.

Functionally, acts as a chaperone during the assembly of the 26S proteasome, specifically of the base subcomplex of the 19S regulatory complex (RC). During the base subcomplex assembly is part of a NAS2:RPT4:RPT5 module; NAS2 is released during the further base assembly process. This Saccharomyces cerevisiae (strain ATCC 204508 / S288c) (Baker's yeast) protein is Probable 26S proteasome regulatory subunit p27 (NAS2).